We begin with the raw amino-acid sequence, 250 residues long: Flavin-dependent thymidylate synthase (250 aa).

Residues 7 to 233 enclose the ThyX domain; it reads LRVQLIAKTE…PAVFADFEVT (227 aa). DUMP is bound by residues 92 to 95, 103 to 107, and Arg-172; these read ELIR and QLSQR. FAD is bound by residues 95–97 and Gln-103; that span reads RHR. Positions 95-105 match the ThyX motif motif; that stretch reads RHRHFSYSQLS. FAD-binding positions include 188-190 and His-194; that span reads NYR. Residue Arg-199 coordinates dUMP. The active-site Involved in ionization of N3 of dUMP, leading to its activation is Arg-199.

The protein belongs to the thymidylate synthase ThyX family. In terms of assembly, homotetramer. The cofactor is FAD.

It carries out the reaction dUMP + (6R)-5,10-methylene-5,6,7,8-tetrahydrofolate + NADPH + H(+) = dTMP + (6S)-5,6,7,8-tetrahydrofolate + NADP(+). The protein operates within pyrimidine metabolism; dTTP biosynthesis. Functionally, catalyzes the reductive methylation of 2'-deoxyuridine-5'-monophosphate (dUMP) to 2'-deoxythymidine-5'-monophosphate (dTMP) while utilizing 5,10-methylenetetrahydrofolate (mTHF) as the methyl donor, and NADPH and FADH(2) as the reductant. This Mycobacterium marinum (strain ATCC BAA-535 / M) protein is Flavin-dependent thymidylate synthase.